We begin with the raw amino-acid sequence, 385 residues long: MKLVRKNIEKDNAGQVTLVPEEPEDMWHTYNLVQVGDSLRASTIRKVQTESSTGSVGSNRVRTTLTLCVEAIDFDSQACQLRVKGTNIQENEYVKMGAYHTIELEPNRQFTLAKKQWDSVVLERIEQACDPAWSADVAAVVMQEGLAHICLVTPSMTLTRAKVEVNIPRKRKGNCSQHDRALERFYEQVVQAIQRHIHFDVVKCILVASPGFVREQFCDYMFQQAVKTDNKLLLENRSKFLQVHASSGHKYSLKEVLCDPTVASRLSDTKAAGEVKALDDFYKMLQHGPDRAFYGLKQVEKANEAMAIDTLLISDELFRHQDVATRSRYVRLVDSVKENAGTVRIFSSLHVSGEQLSQLTGVAAILRFPVPELSDQEDDSSSEED.

A Glycyl lysine isopeptide (Lys-Gly) (interchain with G-Cter in SUMO2) cross-link involves residue K162. S374, S380, S381, and S382 each carry phosphoserine.

It belongs to the eukaryotic release factor 1 family. Pelota subfamily. In terms of assembly, component of the Pelota-HBS1L complex, also named Dom34-Hbs1 complex, composed of PELO and HBS1L. Interacts with PINK1. Interacts with ABCE1. Interacts with CNOT4. It depends on a divalent metal cation as a cofactor.

It is found in the cytoplasm. Functionally, component of the Pelota-HBS1L complex, a complex that recognizes stalled ribosomes and triggers the No-Go Decay (NGD) pathway. In the Pelota-HBS1L complex, PELO recognizes ribosomes stalled at the 3' end of an mRNA and engages stalled ribosomes by destabilizing mRNA in the mRNA channel. Following mRNA extraction from stalled ribosomes by the SKI complex, the Pelota-HBS1L complex promotes recruitment of ABCE1, which drives the disassembly of stalled ribosomes, followed by degradation of damaged mRNAs as part of the NGD pathway. As part of the PINK1-regulated signaling, upon mitochondrial damage is recruited to the ribosome/mRNA-ribonucleoprotein complex associated to mitochondrial outer membrane thereby enabling the recruitment of autophagy receptors and induction of mitophagy. In Pongo abelii (Sumatran orangutan), this protein is Protein pelota homolog (PELO).